The following is a 223-amino-acid chain: 7-cyano-7-deazaguanine synthase (223 aa).

Position 15–25 (15–25 (FSGGQDSTTCL)) interacts with ATP. 4 residues coordinate Zn(2+): cysteine 191, cysteine 200, cysteine 203, and cysteine 206.

The protein belongs to the QueC family. Homodimer. Zn(2+) serves as cofactor.

It carries out the reaction 7-carboxy-7-deazaguanine + NH4(+) + ATP = 7-cyano-7-deazaguanine + ADP + phosphate + H2O + H(+). It functions in the pathway purine metabolism; 7-cyano-7-deazaguanine biosynthesis. Catalyzes the ATP-dependent conversion of 7-carboxy-7-deazaguanine (CDG) to 7-cyano-7-deazaguanine (preQ(0)). This Staphylococcus saprophyticus subsp. saprophyticus (strain ATCC 15305 / DSM 20229 / NCIMB 8711 / NCTC 7292 / S-41) protein is 7-cyano-7-deazaguanine synthase.